A 277-amino-acid polypeptide reads, in one-letter code: Glutamate racemase (277 aa).

Residues 16 to 17 and 48 to 49 contribute to the substrate site; these read DS and YG. C79 serves as the catalytic Proton donor/acceptor. A substrate-binding site is contributed by 80–81; that stretch reads NT. Residue C191 is the Proton donor/acceptor of the active site. 192–193 contacts substrate; it reads TH.

It belongs to the aspartate/glutamate racemases family.

It catalyses the reaction L-glutamate = D-glutamate. It functions in the pathway cell wall biogenesis; peptidoglycan biosynthesis. Functionally, provides the (R)-glutamate required for cell wall biosynthesis. The protein is Glutamate racemase of Symbiobacterium thermophilum (strain DSM 24528 / JCM 14929 / IAM 14863 / T).